We begin with the raw amino-acid sequence, 349 residues long: UDP-3-O-acylglucosamine N-acyltransferase (349 aa).

Histidine 240 serves as the catalytic Proton acceptor.

This sequence belongs to the transferase hexapeptide repeat family. LpxD subfamily. In terms of assembly, homotrimer.

It carries out the reaction a UDP-3-O-[(3R)-3-hydroxyacyl]-alpha-D-glucosamine + a (3R)-hydroxyacyl-[ACP] = a UDP-2-N,3-O-bis[(3R)-3-hydroxyacyl]-alpha-D-glucosamine + holo-[ACP] + H(+). It participates in bacterial outer membrane biogenesis; LPS lipid A biosynthesis. Catalyzes the N-acylation of UDP-3-O-acylglucosamine using 3-hydroxyacyl-ACP as the acyl donor. Is involved in the biosynthesis of lipid A, a phosphorylated glycolipid that anchors the lipopolysaccharide to the outer membrane of the cell. This chain is UDP-3-O-acylglucosamine N-acyltransferase, found in Porphyromonas gingivalis (strain ATCC BAA-308 / W83).